We begin with the raw amino-acid sequence, 101 residues long: Protein Tat (101 aa).

A compositionally biased stretch (basic and acidic residues) spans 1–12 (MEPVDPRLEPWK). Positions 1–20 (MEPVDPRLEPWKHPGSQPKT) are disordered. Residues 1-24 (MEPVDPRLEPWKHPGSQPKTACTT) form an interaction with human CREBBP region. A transactivation region spans residues 1–48 (MEPVDPRLEPWKHPGSQPKTACTTCYCKKCCFHCQVCFTKKALGISYG). Zn(2+) is bound by residues C22, C25, and C27. A cysteine-rich region spans residues 22–37 (CTTCYCKKCCFHCQVC). K28 carries the N6-acetyllysine; by host PCAF modification. Zn(2+) is bound by residues C30, H33, C34, and C37. The tract at residues 38 to 48 (FTKKALGISYG) is core. The interval 47–101 (YGRKKRRQRRRAPEDSQTHQVSLPKQPAPQFRGDPTGPKESKKKVERETETHPVD) is disordered. A Nuclear localization signal, RNA-binding (TAR), and protein transduction motif is present at residues 49–57 (RKKRRQRRR). The interval 49–86 (RKKRRQRRRAPEDSQTHQVSLPKQPAPQFRGDPTGPKE) is interaction with the host capping enzyme RNGTT. Residues K50 and K51 each carry the N6-acetyllysine; by host EP300 and GCN5L2 modification. 2 positions are modified to asymmetric dimethylarginine; by host PRMT6: R52 and R53. K71 is covalently cross-linked (Glycyl lysine isopeptide (Lys-Gly) (interchain with G-Cter in ubiquitin)). A Cell attachment site motif is present at residues 78–80 (RGD). Residues 83 to 101 (GPKESKKKVERETETHPVD) show a composition bias toward basic and acidic residues.

It belongs to the lentiviruses Tat family. As to quaternary structure, interacts with host CCNT1. Associates with the P-TEFb complex composed at least of Tat, P-TEFb (CDK9 and CCNT1), TAR RNA, RNA Pol II. Recruits the HATs CREBBP, TAF1/TFIID, EP300, PCAF and GCN5L2. Interacts with host KAT5/Tip60; this interaction targets the latter to degradation. Interacts with the host deacetylase SIRT1. Interacts with host capping enzyme RNGTT; this interaction stimulates RNGTT. Binds to host KDR, and to the host integrins ITGAV/ITGB3 and ITGA5/ITGB1. Interacts with host KPNB1/importin beta-1 without previous binding to KPNA1/importin alpha-1. Interacts with EIF2AK2. Interacts with host nucleosome assembly protein NAP1L1; this interaction may be required for the transport of Tat within the nucleus, since the two proteins interact at the nuclear rim. Interacts with host C1QBP/SF2P32; this interaction involves lysine-acetylated Tat. Interacts with the host chemokine receptors CCR2, CCR3 and CXCR4. Interacts with host DPP4/CD26; this interaction may trigger an anti-proliferative effect. Interacts with host LDLR. Interacts with the host extracellular matrix metalloproteinase MMP1. Interacts with host PRMT6; this interaction mediates Tat's methylation. Interacts with, and is ubiquitinated by MDM2/Hdm2. Interacts with host PSMC3 and HTATIP2. Interacts with STAB1; this interaction may overcome SATB1-mediated repression of IL2 and IL2RA (interleukin) in T cells by binding to the same domain than HDAC1. Interacts (when acetylated) with human CDK13, thereby increasing HIV-1 mRNA splicing and promoting the production of the doubly spliced HIV-1 protein Nef. Interacts with host TBP; this interaction modulates the activity of transcriptional pre-initiation complex. Interacts with host RELA. Interacts with host PLSCR1; this interaction negatively regulates Tat transactivation activity by altering its subcellular distribution. In terms of processing, asymmetrical arginine methylation by host PRMT6 seems to diminish the transactivation capacity of Tat and affects the interaction with host CCNT1. Acetylation by EP300, CREBBP, GCN5L2/GCN5 and PCAF regulates the transactivation activity of Tat. EP300-mediated acetylation of Lys-50 promotes dissociation of Tat from the TAR RNA through the competitive binding to PCAF's bromodomain. In addition, the non-acetylated Tat's N-terminus can also interact with PCAF. PCAF-mediated acetylation of Lys-28 enhances Tat's binding to CCNT1. Lys-50 is deacetylated by SIRT1. Post-translationally, polyubiquitination by host MDM2 does not target Tat to degradation, but activates its transactivation function and fosters interaction with CCNT1 and TAR RNA. In terms of processing, phosphorylated by EIF2AK2 on serine and threonine residues adjacent to the basic region important for TAR RNA binding and function. Phosphorylation of Tat by EIF2AK2 is dependent on the prior activation of EIF2AK2 by dsRNA.

The protein localises to the host nucleus. Its subcellular location is the host nucleolus. It is found in the host cytoplasm. The protein resides in the secreted. In terms of biological role, transcriptional activator that increases RNA Pol II processivity, thereby increasing the level of full-length viral transcripts. Recognizes a hairpin structure at the 5'-LTR of the nascent viral mRNAs referred to as the transactivation responsive RNA element (TAR) and recruits the cyclin T1-CDK9 complex (P-TEFb complex) that will in turn hyperphosphorylate the RNA polymerase II to allow efficient elongation. The CDK9 component of P-TEFb and other Tat-activated kinases hyperphosphorylate the C-terminus of RNA Pol II that becomes stabilized and much more processive. Other factors such as HTATSF1/Tat-SF1, SUPT5H/SPT5, and HTATIP2 are also important for Tat's function. Besides its effect on RNA Pol II processivity, Tat induces chromatin remodeling of proviral genes by recruiting the histone acetyltransferases (HATs) CREBBP, EP300 and PCAF to the chromatin. This also contributes to the increase in proviral transcription rate, especially when the provirus integrates in transcriptionally silent region of the host genome. To ensure maximal activation of the LTR, Tat mediates nuclear translocation of NF-kappa-B by interacting with host RELA. Through its interaction with host TBP, Tat may also modulate transcription initiation. Tat can reactivate a latently infected cell by penetrating in it and transactivating its LTR promoter. In the cytoplasm, Tat is thought to act as a translational activator of HIV-1 mRNAs. Extracellular circulating Tat can be endocytosed by surrounding uninfected cells via the binding to several surface receptors such as CD26, CXCR4, heparan sulfate proteoglycans (HSPG) or LDLR. Neurons are rarely infected, but they internalize Tat via their LDLR. Through its interaction with nuclear HATs, Tat is potentially able to control the acetylation-dependent cellular gene expression. Modulates the expression of many cellular genes involved in cell survival, proliferation or in coding for cytokines or cytokine receptors. Tat plays a role in T-cell and neurons apoptosis. Tat induced neurotoxicity and apoptosis probably contribute to neuroAIDS. Circulating Tat also acts as a chemokine-like and/or growth factor-like molecule that binds to specific receptors on the surface of the cells, affecting many cellular pathways. In the vascular system, Tat binds to ITGAV/ITGB3 and ITGA5/ITGB1 integrins dimers at the surface of endothelial cells and competes with bFGF for heparin-binding sites, leading to an excess of soluble bFGF. The chain is Protein Tat from Human immunodeficiency virus type 1 group M subtype B (isolate MN) (HIV-1).